The chain runs to 442 residues: tRNA modification GTPase MnmE (442 aa).

(6S)-5-formyl-5,6,7,8-tetrahydrofolate-binding residues include Arg24, Glu84, and Arg124. The TrmE-type G domain maps to 218 to 366 (GARVALFGPV…LRDDMLGRLW (149 aa)). GTP is bound by residues 228–233 (NAGKST), 247–253 (DDEPGTT), and 272–275 (DTAG). 2 residues coordinate Mg(2+): Ser232 and Thr253. Lys442 provides a ligand contact to (6S)-5-formyl-5,6,7,8-tetrahydrofolate.

It belongs to the TRAFAC class TrmE-Era-EngA-EngB-Septin-like GTPase superfamily. TrmE GTPase family. Homodimer. Heterotetramer of two MnmE and two MnmG subunits. It depends on K(+) as a cofactor.

Its subcellular location is the cytoplasm. Its function is as follows. Exhibits a very high intrinsic GTPase hydrolysis rate. Involved in the addition of a carboxymethylaminomethyl (cmnm) group at the wobble position (U34) of certain tRNAs, forming tRNA-cmnm(5)s(2)U34. In Myxococcus xanthus (strain DK1622), this protein is tRNA modification GTPase MnmE.